We begin with the raw amino-acid sequence, 804 residues long: Leucine--tRNA ligase (804 aa).

The 'HIGH' region motif lies at proline 40–histidine 51. Residues lysine 576–serine 580 carry the 'KMSKS' region motif. Lysine 579 is an ATP binding site.

The protein belongs to the class-I aminoacyl-tRNA synthetase family.

It localises to the cytoplasm. It carries out the reaction tRNA(Leu) + L-leucine + ATP = L-leucyl-tRNA(Leu) + AMP + diphosphate. The protein is Leucine--tRNA ligase of Bacillus subtilis (strain 168).